A 172-amino-acid chain; its full sequence is Small ribosomal subunit protein uS5 (172 aa).

Positions 17–80 (LREKMISVNR…DEARRKMVKV (64 aa)) constitute an S5 DRBM domain.

Belongs to the universal ribosomal protein uS5 family. Part of the 30S ribosomal subunit. Contacts proteins S4 and S8.

With S4 and S12 plays an important role in translational accuracy. In terms of biological role, located at the back of the 30S subunit body where it stabilizes the conformation of the head with respect to the body. The chain is Small ribosomal subunit protein uS5 from Cupriavidus pinatubonensis (strain JMP 134 / LMG 1197) (Cupriavidus necator (strain JMP 134)).